The following is a 310-amino-acid chain: S-adenosylmethionine-dependent nucleotide dehydratase (310 aa).

The 219-residue stretch at 3-221 (PAIPPTINLH…VERHRKVESS (219 aa)) folds into the Radical SAM core domain. [4Fe-4S] cluster-binding residues include Cys17, Cys21, and Cys24.

Belongs to the radical SAM superfamily. Viperin family. Requires [4Fe-4S] cluster as cofactor.

It carries out the reaction GTP + AH2 + S-adenosyl-L-methionine = 3'-deoxy-3',4'-didehydro-GTP + 5'-deoxyadenosine + L-methionine + A + H2O + H(+). Expression of pVip15 in E.coli (strain MG1655) confers resistance to phage T7; prevents culture collapse upon infection. Catalyzes the conversion of guanosine triphosphate (GTP) to 3'-deoxy-3',4'-didehydro-GTP (ddhGTP), probably via a SAM-dependent radical mechanism. The modified nucleotide represses transcription from T7 RNA polymerase-directed genes (possibly by acting as chain terminators), strongly suggesting these nucleotides block viral polymerase transcription. The chain is S-adenosylmethionine-dependent nucleotide dehydratase from Coraliomargarita akajimensis (strain DSM 45221 / IAM 15411 / JCM 23193 / KCTC 12865 / 04OKA010-24).